The following is a 474-amino-acid chain: MVQGCTSNAGKSYLCAALCRMLSDEGLRVAPFKAQNMSNNAGVTPPESSAPGLEMGRAQLVQARAARVVPDVRMNPVLLKPEADTSSQVVLLGRAAPELTALPWRERKPRLWPFVKGALHSLLDEFDVVVIEGAGSPAEVNLRPSDIVNMRVAREARAAVLLAADIDRGGAFAHLLGTWHCLMPEERALMRGFILNRFRGDASLLAPAPEWLEEQTGVPTLGVVPWLNVALPEEDGVAVEAPAAIIPSPSTGFVAIPRLPRVSNLDEFAPLGELARWVTSPQELAGARAVILPGSKSTAADLAWLRATGLAGAVTRLAVQGVPVLGICGGLQMLGQTLSDPQGVEGGSAASGGKVYGLGLLDLHTAFAADKTTRLSEVRDPETGLRLQGYEIHHGQTRSGPGVQTLVPGLLWRSGNVRGTYLHGLLENSAYLEHFLRWADLPVPACLDSLDARLDAIAAQVQAGLSWDRVRALL.

The GATase cobBQ-type domain maps to 251 to 431; the sequence is TGFVAIPRLP…LHGLLENSAY (181 aa). The active-site Nucleophile is the Cys-328. The active site involves His-423.

The protein belongs to the CobB/CobQ family. CobQ subfamily.

It functions in the pathway cofactor biosynthesis; adenosylcobalamin biosynthesis. Its function is as follows. Catalyzes amidations at positions B, D, E, and G on adenosylcobyrinic A,C-diamide. NH(2) groups are provided by glutamine, and one molecule of ATP is hydrogenolyzed for each amidation. This is Cobyric acid synthase from Deinococcus radiodurans (strain ATCC 13939 / DSM 20539 / JCM 16871 / CCUG 27074 / LMG 4051 / NBRC 15346 / NCIMB 9279 / VKM B-1422 / R1).